Reading from the N-terminus, the 758-residue chain is GPI ethanolamine phosphate transferase 2 (758 aa).

Residues N28, N77, and N178 are each glycosylated (N-linked (GlcNAc...) asparagine). 3 consecutive transmembrane segments (helical) span residues 405 to 425 (LVAI…FRNL), 431 to 451 (LLAF…SSFI), and 455 to 472 (HVIW…QLLN). A glycan (N-linked (GlcNAc...) asparagine) is linked at N493. The next 6 membrane-spanning stretches (helical) occupy residues 533-553 (PSPI…MPII), 561-581 (PIIA…LLLI), 598-618 (LFIL…YDIW), 667-687 (IFAV…WWCL), 698-718 (VKTF…SCFI), and 733-753 (LLYN…ISTI).

Belongs to the PIGG/PIGN/PIGO family. PIGG subfamily.

It localises to the endoplasmic reticulum membrane. It functions in the pathway glycolipid biosynthesis; glycosylphosphatidylinositol-anchor biosynthesis. Functionally, ethanolamine phosphate transferase involved in glycosylphosphatidylinositol-anchor biosynthesis. Transfers ethanolamine phosphate to the GPI second mannose. This chain is GPI ethanolamine phosphate transferase 2 (las21), found in Schizosaccharomyces pombe (strain 972 / ATCC 24843) (Fission yeast).